The primary structure comprises 94 residues: Large ribosomal subunit protein bL31 (94 aa).

The tract at residues 64–94 is disordered; that stretch reads KYGMANPDEDSTKNTKSSKKETSEDSSSKGS. The segment covering 73–94 has biased composition (basic and acidic residues); the sequence is DSTKNTKSSKKETSEDSSSKGS.

Belongs to the bacterial ribosomal protein bL31 family. Type A subfamily. As to quaternary structure, part of the 50S ribosomal subunit.

In terms of biological role, binds the 23S rRNA. The polypeptide is Large ribosomal subunit protein bL31 (Prochlorococcus marinus (strain SARG / CCMP1375 / SS120)).